The chain runs to 427 residues: A-kinase anchor protein 5 (427 aa).

Residues 1-122 (METTISEIHV…DADLSKKKAK (122 aa)) are disordered. An essential to the intracellular anchoring function region spans residues 1 to 170 (METTISEIHV…LDIQTQTPLN (170 aa)). Residues 8-19 (IHVENKDEKRSA) show a composition bias toward basic and acidic residues. S22 is subject to Phosphoserine. The S-palmitoyl cysteine moiety is linked to residue C36. Residues 37 to 48 (FKRRKKAAKALK) show a composition bias toward basic residues. Positions 76–96 (RGAWASLKRLVTRRKRSESSK) match the AKAP CaM-binding motif. Over residues 92 to 102 (SESSKQQKPLE) the composition is skewed to basic and acidic residues. C129 is lipidated: S-palmitoyl cysteine. 2 stretches are compositionally biased toward polar residues: residues 171–182 (DQATKAKSTQDL) and 242–252 (VQPQQASPLET). Disordered regions lie at residues 171 to 205 (DQAT…STTS), 239 to 269 (KQDV…PPLP), and 281 to 333 (SNST…EESK). The segment covering 302-333 (EETKPKDTELSQESDFKENGITEEKSKSEESK) has biased composition (basic and acidic residues). Positions 392-405 (LIETASSLVKNAIQ) are PKA-RII subunit binding domain. A tethers NFATC2 to CRAC channels region spans residues 410-427 (QLVNEMASDDNKINNLLQ).

In terms of assembly, binding protein for dimer of the RII-beta regulatory subunit of cAMP-dependent protein kinase (PKA) and also for the protein kinase C (PKC) and the phosphatase calcineurin (PP2B). Each enzyme is inhibited when bound to the anchoring protein. Also binds the beta2-adrenergic receptor. Part of a complex containing AKAP5, ADCY5, ADCY6 and PDE4C. Interacts with ADCY8, and enhances its phosphorylation at lipid rafts. Interacts with ORAI1 (isoform alpha) (via N-terminus) upon store depletion and in response to LTC4. Does not interact with ORAI2 and ORAI3 paralogs. Interacts (via leucine zipper domain) with NFATC2/NFAT1. Interacts with calmodulin; the interaction is calcium-independent. Interacts with KCNQ2; the interaction may help KCNQ2 channel complex to retain calcium-bound calmodulin. Interacts with KCNK2; the channel is recruited to postsynaptic microdomains by AKAP5 where it can integrate neurotransmitter receptor signals. Part of a complex composed of AKAP5 and ADRB2. In terms of processing, palmitoylated. Palmitoylation at Cys-36 and Cys-129 play a key role in the targeting of AKAP5 to lipid rafts. Palmitoylation by ZDHHC2 is required for AKAP5 function in LTP-stimulated recycling endosome exocytosis. As to expression, predominantly in the cerebral cortex and the postsynaptic densities of the forebrain, and to a lesser extent in adrenal medulla, lung and anterior pituitary.

It is found in the postsynaptic recycling endosome membrane. Its subcellular location is the cell projection. It localises to the dendrite. The protein resides in the postsynaptic cell membrane. Its function is as follows. Multivalent scaffold protein that anchors the cAMP-dependent protein kinase/PKA to cytoskeletal and/or organelle-associated proteins, targeting the signal carried by cAMP to specific intracellular effectors. Association with the beta2-adrenergic receptor (beta2-AR) not only regulates beta2-AR signaling pathway, but also the activation by PKA by switching off the beta2-AR signaling cascade. Plays a role in long term synaptic potentiation by regulating protein trafficking from the dendritic recycling endosomes to the plasma membrane and controlling both structural and functional plasticity at excitatory synapses. In hippocampal pyramidal neurons, recruits KCNK2/TREK-1 channel at postsynaptic dense bodies microdomains and converts it to a leak channel no longer sensitive to stimulation by arachidonic acid, acidic pH or mechanical stress, nor inhibited by Gq-coupled receptors but still under the negative control of Gs-coupled receptors. Associates with ORAI1 pore-forming subunit of CRAC channels in Ca(2+) signaling microdomains where it recruits NFATC2/NFAT1 and couples store-operated Ca(2+) influx to calmodulin and calcineurin signaling and activation of NFAT-dependent transcriptional responses. This is A-kinase anchor protein 5 (AKAP5) from Homo sapiens (Human).